The sequence spans 466 residues: MTLKASEGESGGSMHTALSDLYLEHLLQKRSRPEAVSHPLNTVTEDMYTNGSPAPGSPAQVKGQEVRKVRLIQIEKVTEEPMGITLKLNEKQSCTVARILHGGMIHRQGSLHVGDEILEINGTNVTNHSVDQLQKAMKETKGMISLKVIPNQQSRLPALQMFMRAQFDYDPKKDNLIPCKEAGLKFATGDIIQIINKDDSNWWQGRVEGSSKESAGLIPSPELQEWRVASIAQSAPSEAPSCSPFGKKKKYKDKYLAKHSSIFDQLDVVSYEEVVRLPAFKRKTLVLIGASGVGRSHIKNALLSQNPEKFVYPAPYTTRPPRKSEEDGKEYHFISTEEMTRNISANEFLEFGSYQGNMFGTKFETVHQIHKQDKIAILDIEPQTLKIVRTAELSPFIVFIAPTDQGTQTEALQQLQKDSEAIRSQYAHYFDLSLVNNSVDETLKKLQEAFDQACSSPQWVPVSWVY.

Thr2 is modified (N-acetylthreonine). Ser13 and Ser19 each carry phosphoserine. A Phosphothreonine modification is found at Thr49. Phosphoserine occurs at positions 52, 57, and 110. Positions 71–152 constitute a PDZ domain; sequence LIQIEKVTEE…MISLKVIPNQ (82 aa). An SH3 domain is found at 158–228; the sequence is ALQMFMRAQF…PSPELQEWRV (71 aa). At Ser243 the chain carries Phosphoserine. Positions 268–466 are interaction with PALS1; sequence VVSYEEVVRL…PQWVPVSWVY (199 aa). The Guanylate kinase-like domain occupies 282–451; it reads RKTLVLIGAS…TLKKLQEAFD (170 aa).

Belongs to the MAGUK family. Heterodimer with PALS1. Interacts with DLG5 and NF2. Interacts (via guanylate kinase-like domain) with WHRN (via third PDZ domain). In terms of processing, palmitoylated.

It localises to the cell membrane. The protein localises to the cell projection. Its subcellular location is the stereocilium. Its function is as follows. Essential regulator of neutrophil polarity. Regulates neutrophil polarization by regulating AKT1 phosphorylation through a mechanism that is independent of PIK3CG activity. The chain is 55 kDa erythrocyte membrane protein (MPP1) from Papio anubis (Olive baboon).